The sequence spans 581 residues: Proteasome-associated ATPase (581 aa).

The segment at 1 to 28 (MTSSDLTQRKGLTMSDSTPDTPRSTPED) is disordered. Residues 14 to 24 (MSDSTPDTPRS) show a composition bias toward polar residues. The stretch at 27–66 (EDAARRLAVLSAQNERLAQVLGEARGKIVELQQQIEEFAK) forms a coiled coil. ATP is bound at residue 248–253 (GCGKTL). Residues 561 to 581 (GSGRSAAGRTIETATSTGQYL) form a disordered region. Polar residues predominate over residues 572–581 (ETATSTGQYL). A docks into pockets in the proteasome alpha-ring region spans residues 580-581 (YL).

This sequence belongs to the AAA ATPase family. In terms of assembly, homohexamer. Assembles into a hexameric ring structure that caps the 20S proteasome core. Strongly interacts with the prokaryotic ubiquitin-like protein Pup through a hydrophobic interface; the interacting region of ARC lies in its N-terminal coiled-coil domain. There is one Pup binding site per ARC hexamer ring. Upon ATP-binding, the C-terminus of ARC interacts with the alpha-rings of the proteasome core, possibly by binding to the intersubunit pockets.

The protein operates within protein degradation; proteasomal Pup-dependent pathway. Its function is as follows. ATPase which is responsible for recognizing, binding, unfolding and translocation of pupylated proteins into the bacterial 20S proteasome core particle. May be essential for opening the gate of the 20S proteasome via an interaction with its C-terminus, thereby allowing substrate entry and access to the site of proteolysis. Thus, the C-termini of the proteasomal ATPase may function like a 'key in a lock' to induce gate opening and therefore regulate proteolysis. The polypeptide is Proteasome-associated ATPase (Sanguibacter keddieii (strain ATCC 51767 / DSM 10542 / NCFB 3025 / ST-74)).